A 69-amino-acid polypeptide reads, in one-letter code: uncharacterized protein (69 aa).

An N-terminal signal peptide occupies residues 1 to 19 (MKRIWVSLMIAITACSAHA).

This is an uncharacterized protein from Pasteurella multocida (strain Pm70).